Reading from the N-terminus, the 343-residue chain is Uroporphyrinogen decarboxylase (343 aa).

Substrate is bound by residues 24–28 (RQAGR), Phe-43, Asp-74, Tyr-151, Ser-206, and His-321.

This sequence belongs to the uroporphyrinogen decarboxylase family. In terms of assembly, homodimer.

It localises to the cytoplasm. The catalysed reaction is uroporphyrinogen III + 4 H(+) = coproporphyrinogen III + 4 CO2. It functions in the pathway porphyrin-containing compound metabolism; protoporphyrin-IX biosynthesis; coproporphyrinogen-III from 5-aminolevulinate: step 4/4. Its function is as follows. Catalyzes the decarboxylation of four acetate groups of uroporphyrinogen-III to yield coproporphyrinogen-III. The polypeptide is Uroporphyrinogen decarboxylase (Thermosynechococcus vestitus (strain NIES-2133 / IAM M-273 / BP-1)).